A 326-amino-acid chain; its full sequence is Fructose-1,6-bisphosphatase class 1 2 (326 aa).

Mg(2+) is bound by residues E84, D103, L105, and D106. Residues 106-109 (DGSS), N198, and K262 contribute to the substrate site. E268 serves as a coordination point for Mg(2+).

This sequence belongs to the FBPase class 1 family. As to quaternary structure, homotetramer. It depends on Mg(2+) as a cofactor.

The protein resides in the cytoplasm. It catalyses the reaction beta-D-fructose 1,6-bisphosphate + H2O = beta-D-fructose 6-phosphate + phosphate. The protein operates within carbohydrate biosynthesis; gluconeogenesis. The polypeptide is Fructose-1,6-bisphosphatase class 1 2 (Pseudoalteromonas translucida (strain TAC 125)).